An 89-amino-acid polypeptide reads, in one-letter code: Small ribosomal subunit protein uS15 (89 aa).

The protein belongs to the universal ribosomal protein uS15 family. In terms of assembly, part of the 30S ribosomal subunit. Forms a bridge to the 50S subunit in the 70S ribosome, contacting the 23S rRNA.

One of the primary rRNA binding proteins, it binds directly to 16S rRNA where it helps nucleate assembly of the platform of the 30S subunit by binding and bridging several RNA helices of the 16S rRNA. Its function is as follows. Forms an intersubunit bridge (bridge B4) with the 23S rRNA of the 50S subunit in the ribosome. This is Small ribosomal subunit protein uS15 from Marinomonas sp. (strain MWYL1).